The chain runs to 158 residues: RNA pyrophosphohydrolase (158 aa).

A Nudix hydrolase domain is found at 8 to 152 (PYRPCAGVML…KRALYRGLIE (145 aa)). A Nudix box motif is present at residues 42-63 (GGIDEGEDAEKAAIRELGEETG).

It belongs to the Nudix hydrolase family. RppH subfamily. A divalent metal cation serves as cofactor.

In terms of biological role, accelerates the degradation of transcripts by removing pyrophosphate from the 5'-end of triphosphorylated RNA, leading to a more labile monophosphorylated state that can stimulate subsequent ribonuclease cleavage. The protein is RNA pyrophosphohydrolase of Sphingopyxis alaskensis (strain DSM 13593 / LMG 18877 / RB2256) (Sphingomonas alaskensis).